The following is a 312-amino-acid chain: Phospholipid phosphatase 3 (312 aa).

Over 1–33 (MQSYKYDKAIVPESKNGGSPALNNNPRKGGSKR) the chain is Cytoplasmic. Serine 19 is modified (phosphoserine). Residues 34-54 (VLLICLDLFCLFMAALPFLII) form a helical membrane-spanning segment. Residues 55–85 (ETSTIKPYRRGFYCNDESIKYPLKVSETIND) are Extracellular-facing. A helical transmembrane segment spans residues 86-106 (AVLCAVGIVIAILRIITGEFY). Topologically, residues 107 to 123 (RIYYLKEKSRSTIQNPY) are cytoplasmic. Residues 109 to 110 (YY) carry the Dityrosine basolateral targeting motif motif. Residues 124-144 (VAALYKQVGCFLFGCAISQSF) form a helical membrane-spanning segment. Residues 145–194 (TDIAKVSIGRLRPHFLSVCDPDFSQINCSEGYIQNYRCRGEDSKVQEARK) are Extracellular-facing. The tract at residues 149-157 (KVSIGRLRP) is phosphatase sequence motif I. A glycan (N-linked (GlcNAc...) asparagine) is linked at asparagine 171. The Integrin-binding motif signature appears at 183-185 (RGE). The chain crosses the membrane as a helical span at residues 195-215 (SFFSGHASFSMFTMLYLVLYL). Residues 197 to 200 (FSGH) form a phosphatase sequence motif II region. Histidine 200 serves as the catalytic Proton donors. Residues 216-226 (QARFTWRGARL) lie on the Cytoplasmic side of the membrane. The helical transmembrane segment at 227–244 (LRPLLQFTLLMMAFYTGL) threads the bilayer. The segment at 245–256 (SRVSDYKHHPSD) is phosphatase sequence motif III. Topologically, residues 245–258 (SRVSDYKHHPSDVL) are extracellular. Residue histidine 252 is the Nucleophile of the active site. Residues 259–279 (AGFAQGALVACCIVFFVSDLF) form a helical membrane-spanning segment. Residues 276–312 (SDLFKTKTTLSLPAPAIRREILSPVDIMDRSNHHNMV) are mediates interaction with CTNND1. Residues 280–312 (KTKTTLSLPAPAIRREILSPVDIMDRSNHHNMV) lie on the Cytoplasmic side of the membrane.

The protein belongs to the PA-phosphatase related phosphoesterase family. Forms functional homodimers and homooligomers that are not required for substrate recognition and catalytic activity. Can also form heterooligomers with other PLPP2 and PLPP3. Interacts with CTNND1; negatively regulates the PLPP3-mediated stabilization of beta-catenin/CTNNB1. Post-translationally, N-glycosylated. Contains high-mannose oligosaccharides. Detected in epithelial cells of intestinal mucosa, lung, liver and brain.

Its subcellular location is the cell membrane. The protein resides in the basolateral cell membrane. The protein localises to the endoplasmic reticulum membrane. It is found in the endoplasmic reticulum-Golgi intermediate compartment membrane. It localises to the golgi apparatus membrane. Its subcellular location is the golgi apparatus. The protein resides in the trans-Golgi network membrane. The protein localises to the membrane raft. The enzyme catalyses a 1,2-diacyl-sn-glycero-3-phosphate + H2O = a 1,2-diacyl-sn-glycerol + phosphate. It catalyses the reaction 1,2-dihexadecanoyl-sn-glycero-3-phosphate + H2O = 1,2-dihexadecanoyl-sn-glycerol + phosphate. The catalysed reaction is 1,2-di-(9Z-octadecenoyl)-sn-glycero-3-phosphate + H2O = 1,2-di-(9Z-octadecenoyl)-sn-glycerol + phosphate. It carries out the reaction a monoacyl-sn-glycero-3-phosphate + H2O = a monoacylglycerol + phosphate. The enzyme catalyses (9Z)-octadecenoyl-sn-glycero-3-phosphate + H2O = (9Z-octadecenoyl)-glycerol + phosphate. It catalyses the reaction sphing-4-enine 1-phosphate + H2O = sphing-4-enine + phosphate. The catalysed reaction is an N-acylsphing-4-enine 1-phosphate + H2O = an N-acylsphing-4-enine + phosphate. It carries out the reaction N-(octanoyl)-sphing-4-enine-1-phosphate + H2O = N-octanoylsphing-4-enine + phosphate. The enzyme catalyses N-(9Z-octadecenoyl)-ethanolamine phosphate + H2O = N-(9Z-octadecenoyl) ethanolamine + phosphate. It participates in lipid metabolism; phospholipid metabolism. With respect to regulation, magnesium-independent phospholipid phosphatase. Insensitive to N-ethylmaleimide. Inhibited by sphingosine, zinc ions and modestly by propanolol. Magnesium-independent phospholipid phosphatase of the plasma membrane that catalyzes the dephosphorylation of a variety of glycerolipid and sphingolipid phosphate esters including phosphatidate/PA, lysophosphatidate/LPA, diacylglycerol pyrophosphate/DGPP, sphingosine 1-phosphate/S1P and ceramide 1-phosphate/C1P. Also acts on N-oleoyl ethanolamine phosphate/N-(9Z-octadecenoyl)-ethanolamine phosphate, a potential physiological compound. Has both an extracellular and an intracellular phosphatase activity, allowing the hydrolysis and the cellular uptake of these bioactive lipid mediators from the milieu, regulating signal transduction in different cellular processes. Through the dephosphorylation of extracellular sphingosine-1-phosphate and the regulation of its extra- and intracellular availability, plays a role in vascular homeostasis, regulating endothelial cell migration, adhesion, survival, proliferation and the production of pro-inflammatory cytokines. By maintaining the appropriate levels of this lipid in the cerebellum, also ensure its proper development and function. Through its intracellular lipid phosphatase activity may act in early compartments of the secretory pathway, regulating the formation of Golgi to endoplasmic reticulum retrograde transport carriers. In terms of biological role, independently of this phosphatase activity may also function in the Wnt signaling pathway and the stabilization of beta-catenin/CTNNB1, thereby regulating cell proliferation, migration and differentiation in angiogenesis or yet in tumor growth. Also plays a role in integrin-mediated cell-cell adhesion in angiogenesis. In Rattus norvegicus (Rat), this protein is Phospholipid phosphatase 3.